The primary structure comprises 889 residues: Oxysterol-binding protein-related protein 8 (889 aa).

Methionine 1 bears the N-acetylmethionine mark. The disordered stretch occupies residues 1–129 (MEAALADGEP…SLKVQKKNYR (129 aa)). Phosphoserine occurs at positions 14, 65, and 68. Residues 62 to 71 (PSLSPASLHS) are compositionally biased toward polar residues. Composition is skewed to basic and acidic residues over residues 73–88 (GFERGKEDISQNKDDS), 95–109 (SKSESKLYNGSEKDS), and 116–129 (TKKESLKVQKKNYR). Positions 148 to 265 (VIVMADWLKI…WMDALELALK (118 aa)) constitute a PH domain. Serine 314, serine 328, and serine 342 each carry phosphoserine. The segment covering 321 to 336 (FKDQDLYSDKSDKEND) has biased composition (basic and acidic residues). The disordered stretch occupies residues 321–374 (FKDQDLYSDKSDKENDPEHDESDNEVLGKSEESDTDTSERQDDSYIDPEPVEPL). Positions 346 to 363 (VLGKSEESDTDTSERQDD) are enriched in basic and acidic residues. A 1,2-diacyl-sn-glycero-3-phospho-(1D-myo-inositol 4-phosphate)-binding positions include 420–425 (LSRVVL), 482–485 (KPYN), and 514–515 (HH). Residues 420–425 (LSRVVL) and asparagine 485 each bind a 1,2-diacyl-sn-glycero-3-phospho-L-serine. A 1,2-diacyl-sn-glycero-3-phospho-L-serine is bound at residue serine 540. Lysine 706, glutamate 710, and arginine 714 together coordinate a 1,2-diacyl-sn-glycero-3-phospho-(1D-myo-inositol 4-phosphate). The disordered stretch occupies residues 772 to 823 (HRTPMVSVPKMKHKPTRQQKKVVKGYSSPEPDIQDSSGSEAQSVKPSTRRKK). The segment covering 781–794 (KMKHKPTRQQKKVV) has biased composition (basic residues). The span at 805–817 (QDSSGSEAQSVKP) shows a compositional bias: polar residues. Serine 807, serine 808, serine 810, and serine 814 each carry phosphoserine. The helical transmembrane segment at 871 to 888 (YFVIFLLILLQVIINFIF) threads the bilayer.

The protein belongs to the OSBP family. Interacts with SPAG5. Interacts with NUP62. Widely expressed. Most abundant in liver, spleen, kidney, brain and adipose tissue.

Its subcellular location is the endoplasmic reticulum membrane. The protein localises to the nucleus membrane. Functionally, lipid transporter involved in lipid countertransport between the endoplasmic reticulum and the plasma membrane: specifically exchanges phosphatidylserine with phosphatidylinositol 4-phosphate (PI4P), delivering phosphatidylserine to the plasma membrane in exchange for PI4P, which is degraded by the SAC1/SACM1L phosphatase in the endoplasmic reticulum. Binds phosphatidylserine and PI4P in a mutually exclusive manner. Binds oxysterol, 25-hydroxycholesterol and cholesterol. The sequence is that of Oxysterol-binding protein-related protein 8 from Mus musculus (Mouse).